The sequence spans 228 residues: Ribosomal RNA small subunit methyltransferase G (228 aa).

S-adenosyl-L-methionine-binding positions include Gly89, Leu94, 140–141 (VE), and Arg159.

Belongs to the methyltransferase superfamily. RNA methyltransferase RsmG family.

Its subcellular location is the cytoplasm. The enzyme catalyses guanosine(527) in 16S rRNA + S-adenosyl-L-methionine = N(7)-methylguanosine(527) in 16S rRNA + S-adenosyl-L-homocysteine. Specifically methylates the N7 position of guanine in position 527 of 16S rRNA. In Burkholderia ambifaria (strain ATCC BAA-244 / DSM 16087 / CCUG 44356 / LMG 19182 / AMMD) (Burkholderia cepacia (strain AMMD)), this protein is Ribosomal RNA small subunit methyltransferase G.